The chain runs to 310 residues: UDP-N-acetylenolpyruvoylglucosamine reductase (310 aa).

Positions valine 35–alanine 199 constitute an FAD-binding PCMH-type domain. Arginine 179 is a catalytic residue. Residue serine 228 is the Proton donor of the active site. The active site involves glutamate 298.

Belongs to the MurB family. FAD serves as cofactor.

It localises to the cytoplasm. It catalyses the reaction UDP-N-acetyl-alpha-D-muramate + NADP(+) = UDP-N-acetyl-3-O-(1-carboxyvinyl)-alpha-D-glucosamine + NADPH + H(+). It functions in the pathway cell wall biogenesis; peptidoglycan biosynthesis. Functionally, cell wall formation. The protein is UDP-N-acetylenolpyruvoylglucosamine reductase of Rhodopseudomonas palustris (strain BisB5).